The primary structure comprises 2595 residues: Glucosylceramide transporter ABCA12 (2595 aa).

The helical transmembrane segment at 23–43 (PLWTLVLILWPVIIFIILAIT) threads the bilayer. A compositionally biased stretch (basic and acidic residues) spans 109–119 (LKKPSNPKRDS). A disordered region spans residues 109–143 (LKKPSNPKRDSNLSLRSTQVPERSHTSLATVPPRP). Residues asparagine 120, asparagine 156, asparagine 174, asparagine 214, asparagine 275, asparagine 331, asparagine 365, asparagine 381, asparagine 410, asparagine 433, asparagine 455, asparagine 526, asparagine 541, asparagine 574, asparagine 605, asparagine 645, asparagine 749, asparagine 773, asparagine 812, asparagine 823, asparagine 854, asparagine 917, and asparagine 960 are each glycosylated (N-linked (GlcNAc...) asparagine). Positions 120–137 (NLSLRSTQVPERSHTSLA) are enriched in polar residues. Transmembrane regions (helical) follow at residues 1062–1082 (VSYS…AAFV), 1109–1129 (FAWL…LIVI), and 1142–1162 (FILF…SYLI). An N-linked (GlcNAc...) asparagine glycan is attached at asparagine 1167. Transmembrane regions (helical) follow at residues 1171 to 1191 (IAAL…IVLV), 1197 to 1217 (LSYV…SYAS), and 1247 to 1267 (FGWL…IAWY). Asparagine 1319 carries N-linked (GlcNAc...) asparagine glycosylation. Residues 1346–1577 (VALHGVTKIY…FGDGYHLTLT (232 aa)) enclose the ABC transporter 1 domain. 1378–1385 (GPNGAGKT) lines the ATP pocket. Residues asparagine 1524, asparagine 1663, asparagine 1673, asparagine 1686, asparagine 1690, and asparagine 1704 are each glycosylated (N-linked (GlcNAc...) asparagine). The interval 1672 to 1703 (SNMSLEHLTQRKVGNPSANGTSTPDDLSVSSS) is disordered. Residues 1687-1703 (PSANGTSTPDDLSVSSS) show a composition bias toward polar residues. Residues 1747–1767 (LIAQVILPIVFVATAMGLGTL) form a helical membrane-spanning segment. N-linked (GlcNAc...) asparagine glycans are attached at residues asparagine 1819, asparagine 1835, asparagine 1876, asparagine 1921, and asparagine 1952. 7 consecutive transmembrane segments (helical) span residues 1979–1999 (ATIS…GYSV), 2035–2055 (FIYD…VIAI), 2072–2092 (LLLL…AGLF), 2103–2123 (VCVN…VYFL), 2143–2163 (IFLI…SQQQ), 2187–2207 (GAMF…RLLI), and 2270–2290 (IIAV…GLLG). One can recognise an ABC transporter 2 domain in the interval 2254-2489 (VQLHRLTKTY…FGRGFTVKVH (236 aa)). 2290 to 2297 (GVNGAGKT) provides a ligand contact to ATP. N-linked (GlcNAc...) asparagine glycans are attached at residues asparagine 2318, asparagine 2542, and asparagine 2547. Residues 2575 to 2587 (VDTSSQGSTISVD) are compositionally biased toward polar residues. The segment at 2575-2595 (VDTSSQGSTISVDSQEDQLDS) is disordered.

Belongs to the ABC transporter superfamily. ABCA family. In terms of assembly, interacts with NR1H2 and ABCA1; this interaction is required for ABCA1 localization to the cell surface and is necessary for its normal activity and stability. As to expression, expressed in a number of other tissues besides skin, including heart, intestine, stomach, and kidney. Expressed mainly in the granular layer of the skin. Expressed in lung. Expressed in alpha and beta cells of pancreatic islets.

The protein resides in the cytoplasmic vesicle. It localises to the secretory vesicle membrane. Its subcellular location is the golgi apparatus membrane. It catalyses the reaction ATP + H2O + phospholipidSide 1 = ADP + phosphate + phospholipidSide 2.. The catalysed reaction is a beta-D-glucosylceramide(in) + ATP + H2O = a beta-D-glucosylceramide(out) + ADP + phosphate + H(+). Transports lipids such as glucosylceramides from the outer to the inner leaflet of lamellar granules (LGs) membrane, whereby the lipids are finally transported to the keratinocyte periphery via the trans-Golgi network and LGs and released to the apical surface of the granular keratinocytes to form lipid lamellae in the stratum corneum of the epidermis, which is essential for skin barrier function. In the meantime, participates in the transport of the lamellar granules-associated proteolytic enzymes, in turn regulates desquamation and keratinocyte differentiation. Furthermore, is essential for the regulation of cellular cholesterol homeostasis by regulating ABCA1-dependent cholesterol efflux from macrophages through interaction with NR1H2 and ABCA1. Plays pleiotropic roles in regulating glucose stimulated insulin secretion from beta cells, regulating the morphology and fusion of insulin granules, lipid raft abundance and the actin cytoskeleton. Also involved in lung surfactant biogenesis. The sequence is that of Glucosylceramide transporter ABCA12 from Mus musculus (Mouse).